The chain runs to 98 residues: GYLGGYAAPALAYGAAPAVAYAAPAAYAPAALTSQSSNILRSYGNLGQVSTYTKTVDTPYSSVTKSDVRVSNDAIAHVAAPALAYAAPAAYAAPAYYH.

6 tandem repeats follow at residues 7-10 (AAPA), 15-18 (AAPA), 22-25 (AAPA), 79-82 (AAPA), 86-89 (AAPA), and 92-95 (AAPA).

Component of the cuticle of migratory locust which contains more than 100 different structural proteins. The sequence is that of Cuticle protein 67, isoform A from Locusta migratoria (Migratory locust).